The primary structure comprises 186 residues: Ribosome-recycling factor (186 aa).

The protein belongs to the RRF family.

It localises to the cytoplasm. Functionally, responsible for the release of ribosomes from messenger RNA at the termination of protein biosynthesis. May increase the efficiency of translation by recycling ribosomes from one round of translation to another. This chain is Ribosome-recycling factor, found in Bacteroides fragilis (strain ATCC 25285 / DSM 2151 / CCUG 4856 / JCM 11019 / LMG 10263 / NCTC 9343 / Onslow / VPI 2553 / EN-2).